The chain runs to 485 residues: MRWKNKKIPEGEFMEMREEILQTWPTGKDVDLKESIDYLKKIPPEKNFAIKLEQADKEGITTAQPRAGVPLLDEHINLLQFLQDEGGADFLPSTIDAYTRQNRYEEGEAGIEASKKAGRSLMNGFPAVNWGVGPCRQVLEAVNLPLQARHGTPDARLLSEIIHAGGYTSNEGGGISYNVPYAKAVSIEHSIMCWQYADRLVGFYEENGVHLNREPFGPLTGTLVPPSVAIAVGVIEALLAAEQGVKSITVGYGMCGNMTQDVAAVISLREITKDYMKKFGYKDMCITTVFHQWMGGFPADESRAYGLISLGSTTAALSGATKVIVKTPHEAFGIPTKEANAGGIKATKMVLNLLKGQRYPDSRVLAQEIELIKAETKCIMDKVYEIGGGDLVEGTIKAFEAGVIDIPFAPSQYNAGKVMPARDNDGCIRYLMPGNLPFTKDILDFNRGKLEERAKADKREVDFQMSVDDVYAVSSGVLVGRPAKR.

L-glutamate is bound at residue Arg-66. An adenosylcob(III)alamin-binding site is contributed by Gly-68. Arg-100 contacts L-glutamate. Asn-123 serves as a coordination point for adenosylcob(III)alamin. Residues Arg-149–His-150, Glu-171, and Tyr-177 contribute to the L-glutamate site. Pro-180 is a binding site for adenosylcob(III)alamin. An L-glutamate-binding site is contributed by Tyr-181. 4 residues coordinate adenosylcob(III)alamin: Phe-297, Lys-326, Glu-330, and Ile-334.

It belongs to the methylaspartate mutase GlmE subunit family. As to quaternary structure, heterotetramer composed of 2 epsilon subunits (GlmE) and 2 sigma subunits (GlmS). GlmE exists as a homodimer and GlmS as a monomer. Adenosylcob(III)alamin is required as a cofactor.

It catalyses the reaction (2S,3S)-3-methyl-L-aspartate = L-glutamate. Its pathway is amino-acid degradation; L-glutamate degradation via mesaconate pathway; acetate and pyruvate from L-glutamate: step 1/4. Catalyzes the carbon skeleton rearrangement of L-glutamate to L-threo-3-methylaspartate ((2S,3S)-3-methylaspartate). The protein is Glutamate mutase epsilon subunit of Treponema denticola (strain ATCC 35405 / DSM 14222 / CIP 103919 / JCM 8153 / KCTC 15104).